The chain runs to 181 residues: MESGFKASLKDAIRTIPDYPKPGVQFRDVTTLMGDAQAFRRSVDELVYPYAGNKVDKVAGIEARGFILGGAIAHQLSAGFVPIRKKGKLPRDTVRIAYSLEYGIDEMEMHRDAIEKGERIILVDDLIATGGTAEAAAKLLLQMGAEIVAACFIIDLPDLGGRKKLEALGVPVRTLVAFEGD.

This sequence belongs to the purine/pyrimidine phosphoribosyltransferase family. Homodimer.

The protein resides in the cytoplasm. It catalyses the reaction AMP + diphosphate = 5-phospho-alpha-D-ribose 1-diphosphate + adenine. It participates in purine metabolism; AMP biosynthesis via salvage pathway; AMP from adenine: step 1/1. Its function is as follows. Catalyzes a salvage reaction resulting in the formation of AMP, that is energically less costly than de novo synthesis. This is Adenine phosphoribosyltransferase from Brucella anthropi (strain ATCC 49188 / DSM 6882 / CCUG 24695 / JCM 21032 / LMG 3331 / NBRC 15819 / NCTC 12168 / Alc 37) (Ochrobactrum anthropi).